We begin with the raw amino-acid sequence, 89 residues long: Large ribosomal subunit protein bL27 (89 aa).

Belongs to the bacterial ribosomal protein bL27 family.

The sequence is that of Large ribosomal subunit protein bL27 from Synechococcus sp. (strain JA-3-3Ab) (Cyanobacteria bacterium Yellowstone A-Prime).